The chain runs to 223 residues: NLP effector protein 2 (223 aa).

Positions 90–100 match the Conserved undecapeptide motif motif; sequence AIMYSWYFPKD. The short motif at 107-113 is the Conserved p motif element; that stretch reads GHRHDWE.

It belongs to the Necrosis inducing protein (NPP1) family.

The protein localises to the secreted. The protein resides in the host cytoplasm. Its function is as follows. Probable secreted effector that may act as a pathogen-associated molecular pattern (PAMP) recognized by the plant immune system. Seems not to induce necrosis, neither in several susceptible or resistant Vitis species nor in the dicot model plant Nicotiana benthamiana. This is NLP effector protein 2 from Plasmopara viticola (Downy mildew of grapevine).